A 478-amino-acid chain; its full sequence is Patatin-like phospholipase domain-containing protein 2 (478 aa).

The Cytoplasmic portion of the chain corresponds to 1 to 8 (MFPRETKW). The chain crosses the membrane as a helical span at residues 9–29 (NISFAGCGFLGVYHIGVASCL). Positions 10–179 (ISFAGCGFLG…SDNLPLYELK (170 aa)) constitute a PNPLA domain. The GXGXXG signature appears at 14-19 (GCGFLG). The Extracellular segment spans residues 30 to 42 (REHAPFLVANATH). The N-linked (GlcNAc...) asparagine glycan is linked to Asn39. The chain crosses the membrane as a helical span at residues 43-63 (IYGASAGALTATALVTGACLG). Residues 45-49 (GASAG) carry the GXSXG motif. Catalysis depends on Ser47, which acts as the Nucleophile. The Cytoplasmic portion of the chain corresponds to 64 to 137 (EAGANIIEVS…IISHFSSKDE (74 aa)). A Glycyl lysine isopeptide (Lys-Gly) (interchain with G-Cter in ubiquitin) cross-link involves residue Lys92. A helical membrane pass occupies residues 138–158 (LIQANVCSTFIPVYCGLIPPT). Topologically, residues 159–323 (LQGVRYVDGG…TTLSNMLPVR (165 aa)) are extracellular. The Proton acceptor role is filled by Asp166. A DGA/G motif is present at residues 166–168 (DGG). A helical transmembrane segment spans residues 324 to 344 (LATAMMVPYTLPLESAVSFTI). The Cytoplasmic segment spans residues 345–478 (RLLEWLPDVP…PQDPSGLPPC (134 aa)). Ser366 bears the Phosphoserine; in vitro mark. The residue at position 388 (Ser388) is a Phosphoserine; by PKA. Phosphoserine occurs at positions 398 and 422. Residues 456–478 (RAPASPTATDPATPQDPSGLPPC) form a disordered region. A compositionally biased stretch (low complexity) spans 457–478 (APASPTATDPATPQDPSGLPPC). Position 460 is a phosphoserine; in vitro (Ser460).

Interacts with ABHD5; this association stimulates PNPLA2 triglyceride hydrolase activity. Interacts with SERPINF1; this interaction stimulates the phospholipase A2 activity of PNPLA2. Despite a colocalization in lipid droplets, it probably does not interact with PLIN. Interacts with PLIN5; prevents interaction with ABHD5. Interacts with FAF2. Phosphorylation at Ser-398 by PKA is increased during fasting and moderate intensity exercise, and moderately increases lipolytic activity. In terms of processing, ubiquitinated by PEX2 in response to reactive oxygen species (ROS), leading to its degradation. Ubiquitination is stimulated by LDAH.

The protein resides in the lipid droplet. Its subcellular location is the cell membrane. It localises to the cytoplasm. The catalysed reaction is a triacylglycerol + H2O = a diacylglycerol + a fatty acid + H(+). It catalyses the reaction a triacylglycerol + H2O = a 1,2-diacylglycerol + a fatty acid + H(+). The enzyme catalyses a triacylglycerol + H2O = a 1,3-diacylglycerol + a fatty acid + H(+). It carries out the reaction a triacyl-sn-glycerol + H2O = a 1,3-diacyl-sn-glycerol + a fatty acid + H(+). The catalysed reaction is a triacyl-sn-glycerol + H2O = a 2,3-diacyl-sn-glycerol + a fatty acid + H(+). It catalyses the reaction a 1-acylglycerol + a 1,3-diacylglycerol = a triacylglycerol + glycerol. The enzyme catalyses a 1-acylglycerol + a 1,2-diacylglycerol = a triacylglycerol + glycerol. It carries out the reaction 2 a 1-acylglycerol = a 1,2-diacylglycerol + glycerol. The catalysed reaction is a triacylglycerol + all-trans-retinol = an all-trans-retinyl ester + a diacylglycerol. It catalyses the reaction 1,2-di-(9Z-octadecenoyl)-glycerol + (9Z)-octadecenoate + H(+) = 1,2,3-tri-(9Z-octadecenoyl)-glycerol + H2O. The enzyme catalyses 1,2,3-tri-(9Z-octadecenoyl)-glycerol + H2O = 1,3-di-(9Z-octadecenoyl)-glycerol + (9Z)-octadecenoate + H(+). It carries out the reaction 1-(9Z-octadecenoyl)-glycerol + 1,3-di-(9Z-octadecenoyl)-glycerol = 1,2,3-tri-(9Z-octadecenoyl)-glycerol + glycerol. The catalysed reaction is 1-(9Z-octadecenoyl)-glycerol + 1,2-di-(9Z-octadecenoyl)-glycerol = 1,2,3-tri-(9Z-octadecenoyl)-glycerol + glycerol. It catalyses the reaction 2 1-(9Z-octadecenoyl)-glycerol = 1,2-di-(9Z-octadecenoyl)-glycerol + glycerol. The enzyme catalyses 1,2,3-tri-(9Z-octadecenoyl)-glycerol + all-trans-retinol = all-trans-retinyl 9Z-octadecenoate + di-(9Z)-octadecenoylglycerol. It carries out the reaction 1,2,3-tri-(9Z)-hexadecenoylglycerol + H2O = 1,3-di-(9Z)-hexadecenoylglycerol + (9Z)-hexadecenoate + H(+). The catalysed reaction is 1,2,3-tri-(9Z,12Z)-octadecadienoylglycerol + H2O = 1,3-di-(9Z,12Z)-octadecadienoylglycerol + (9Z,12Z)-octadecadienoate + H(+). It catalyses the reaction 1,2,3-tri-(9Z,12Z,15Z)-octadecatrienoylglycerol + H2O = 1,3-di-(9Z,12Z,15Z)-octadecatrienoylglycerol + (9Z,12Z,15Z)-octadecatrienoate + H(+). The enzyme catalyses 1,3-di-(9Z)-octadecenoyl-2-hexadecanoylglycerol + H2O = 1,3-di-(9Z-octadecenoyl)-glycerol + hexadecanoate + H(+). It carries out the reaction 1,2-di-(9Z)-octadecenoyl-3-hexadecanoyl-sn-glycerol + H2O = 1-(9Z)-octadecenoyl-3-hexadecanoyl-sn-glycerol + (9Z)-octadecenoate + H(+). The catalysed reaction is 1-hexadecanoyl-2,3-di-(9Z)-octadecenoyl-sn-glycerol + H2O = 1-hexadecanoyl-3-(9Z)-octadecenoyl-sn-glycerol + (9Z)-octadecenoate + H(+). It catalyses the reaction 1,2,3-tri-(9Z-octadecenoyl)-glycerol + H2O = 2,3-di-(9Z)-octadecenoyl-sn-glycerol + (9Z)-octadecenoate + H(+). The enzyme catalyses 1,2,3-tri-(9Z)-hexadecenoylglycerol + H2O = 2,3-di-(9Z)-hexadecenoyl-sn-glycerol + (9Z)-hexadecenoate + H(+). It carries out the reaction 1,2,3-tri-(9Z,12Z)-octadecadienoylglycerol + H2O = 2,3-di-(9Z,12Z)-octadecadienoyl-sn-glycerol + (9Z,12Z)-octadecadienoate + H(+). The catalysed reaction is 1,2,3-tri-(9Z,12Z,15Z)-octadecatrienoylglycerol + H2O = 2,3-di-(9Z,12Z,15Z)-octadecatrienoyl-sn-glycerol + (9Z,12Z,15Z)-octadecatrienoate + H(+). It catalyses the reaction 1,3-di-(9Z)-octadecenoyl-2-hexadecanoylglycerol + H2O = 2-hexadecanoyl-3-(9Z)-octadecenoyl-sn-glycerol + (9Z)-octadecenoate + H(+). The enzyme catalyses 1-hexadecanoyl-2,3-di-(9Z)-octadecenoyl-sn-glycerol + H2O = 2,3-di-(9Z)-octadecenoyl-sn-glycerol + hexadecanoate + H(+). It carries out the reaction 1,2-di-(9Z)-octadecenoyl-3-hexadecanoyl-sn-glycerol + H2O = 2-(9Z-octadecenoyl)-3-hexadecanoyl-sn-glycerol + (9Z)-octadecenoate + H(+). The catalysed reaction is a 1,2-diacyl-sn-glycero-3-phosphocholine + H2O = a 1-acyl-sn-glycero-3-phosphocholine + a fatty acid + H(+). It catalyses the reaction 1,2,3-tri-(9Z-octadecenoyl)-glycerol + 9-hydroxy-octadecanoate = 9-(9Z-octadecenoyloxy)-octadecanoate + 2,3-di-(9Z)-octadecenoyl-sn-glycerol. The enzyme catalyses 1-hexadecanoyl-2,3-di-(9Z)-octadecenoyl-sn-glycerol + 9-hydroxy-octadecanoate = 9-hexadecanoyloxy-octadecanoate + 2,3-di-(9Z)-octadecenoyl-sn-glycerol. It carries out the reaction 1,2,3-tri-(10Z)-heptadecenoylglycerol + 9-hydroxy-octadecanoate = 2,3-di-(10Z-heptadecenoyl)-sn-glycerol + 9-(10Z-heptadecenoyloxy)-octadecanoate. The catalysed reaction is 1,2,3-tri-(9Z,12Z)-octadecadienoylglycerol + 9-hydroxy-octadecanoate = 2,3-di-(9Z,12Z)-octadecadienoyl-sn-glycerol + 9-(9Z,12Z-octadecadienoyloxy)-octadecanoate. It catalyses the reaction 1,2,3-tri-(9Z)-hexadecenoylglycerol + 9-hydroxy-octadecanoate = 2,3-di-(9Z)-hexadecenoyl-sn-glycerol + 9-(9Z-hexadecenoyloxy)-octadecanoate. The enzyme catalyses 9-hydroxy-octadecanoate + 1,2-di-(9Z-octadecenoyl)-sn-glycerol = 9-(9Z-octadecenoyloxy)-octadecanoate + 2-(9Z-octadecenoyl)-glycerol. It carries out the reaction 1-hexadecanoyl-2,3-di-(9Z)-octadecenoyl-sn-glycerol + 9-hydroxy-octadecanoate = 1-hexadecanoyl-3-(9Z)-octadecenoyl-sn-glycerol + 9-(9Z-octadecenoyloxy)-octadecanoate. The protein operates within glycerolipid metabolism; triacylglycerol degradation. In terms of biological role, catalyzes the initial step in triglyceride hydrolysis in adipocyte and non-adipocyte lipid droplets. Exhibits a strong preference for the hydrolysis of long-chain fatty acid esters at the sn-2 position of the glycerol backbone and acts coordinately with LIPE/HLS and DGAT2 within the lipolytic cascade. Also possesses acylglycerol transacylase and phospholipase A2 activities. Transfers fatty acid from triglyceride to retinol, hydrolyzes retinylesters, and generates 1,3-diacylglycerol from triglycerides. Regulates adiposome size and may be involved in the degradation of adiposomes. Catalyzes the formation of an ester bond between hydroxy fatty acids and fatty acids derived from triglycerides or diglycerides to generate fatty acid esters of hydroxy fatty acids (FAHFAs) in adipocytes. Acts antagonistically with LDAH in regulation of cellular lipid stores. Inhibits LDAH-stimulated lipid droplet fusion. May play an important role in energy homeostasis. May play a role in the response of the organism to starvation, enhancing hydrolysis of triglycerides and providing free fatty acids to other tissues to be oxidized in situations of energy depletion. The chain is Patatin-like phospholipase domain-containing protein 2 from Rattus norvegicus (Rat).